The sequence spans 120 residues: Small ribosomal subunit protein eS25 (120 aa).

The tract at residues 1–32 (MPPKAGQTKKAKMEAANKGAKKTTKKWSKGQS) is disordered. Residues 19-28 (GAKKTTKKWS) are compositionally biased toward basic residues.

The protein belongs to the eukaryotic ribosomal protein eS25 family.

The polypeptide is Small ribosomal subunit protein eS25 (RPS25) (Leishmania infantum).